A 382-amino-acid polypeptide reads, in one-letter code: Dual-specificity RNA methyltransferase RlmN (382 aa).

Catalysis depends on Glu96, which acts as the Proton acceptor. A Radical SAM core domain is found at 102-342; sequence QGKRGTLCVS…VRTTRGEDID (241 aa). Cys109 and Cys345 are joined by a disulfide. Cys116, Cys120, and Cys123 together coordinate [4Fe-4S] cluster. Residues 170–171, Ser202, 224–226, and Asn302 contribute to the S-adenosyl-L-methionine site; these read GE and SLH. The active-site S-methylcysteine intermediate is Cys345.

It belongs to the radical SAM superfamily. RlmN family. It depends on [4Fe-4S] cluster as a cofactor.

The protein localises to the cytoplasm. It carries out the reaction adenosine(2503) in 23S rRNA + 2 reduced [2Fe-2S]-[ferredoxin] + 2 S-adenosyl-L-methionine = 2-methyladenosine(2503) in 23S rRNA + 5'-deoxyadenosine + L-methionine + 2 oxidized [2Fe-2S]-[ferredoxin] + S-adenosyl-L-homocysteine. It catalyses the reaction adenosine(37) in tRNA + 2 reduced [2Fe-2S]-[ferredoxin] + 2 S-adenosyl-L-methionine = 2-methyladenosine(37) in tRNA + 5'-deoxyadenosine + L-methionine + 2 oxidized [2Fe-2S]-[ferredoxin] + S-adenosyl-L-homocysteine. Specifically methylates position 2 of adenine 2503 in 23S rRNA and position 2 of adenine 37 in tRNAs. m2A2503 modification seems to play a crucial role in the proofreading step occurring at the peptidyl transferase center and thus would serve to optimize ribosomal fidelity. The sequence is that of Dual-specificity RNA methyltransferase RlmN from Pseudomonas savastanoi pv. phaseolicola (strain 1448A / Race 6) (Pseudomonas syringae pv. phaseolicola (strain 1448A / Race 6)).